Reading from the N-terminus, the 523-residue chain is Bifunctional purine biosynthesis protein PurH (523 aa).

The MGS-like domain occupies 1-152 (MSTDDGRRPI…KNHPSAAVVT (152 aa)).

It belongs to the PurH family.

The enzyme catalyses (6R)-10-formyltetrahydrofolate + 5-amino-1-(5-phospho-beta-D-ribosyl)imidazole-4-carboxamide = 5-formamido-1-(5-phospho-D-ribosyl)imidazole-4-carboxamide + (6S)-5,6,7,8-tetrahydrofolate. It catalyses the reaction IMP + H2O = 5-formamido-1-(5-phospho-D-ribosyl)imidazole-4-carboxamide. Its pathway is purine metabolism; IMP biosynthesis via de novo pathway; 5-formamido-1-(5-phospho-D-ribosyl)imidazole-4-carboxamide from 5-amino-1-(5-phospho-D-ribosyl)imidazole-4-carboxamide (10-formyl THF route): step 1/1. It participates in purine metabolism; IMP biosynthesis via de novo pathway; IMP from 5-formamido-1-(5-phospho-D-ribosyl)imidazole-4-carboxamide: step 1/1. The sequence is that of Bifunctional purine biosynthesis protein PurH from Mycobacterium bovis (strain BCG / Pasteur 1173P2).